Consider the following 110-residue polypeptide: Parvalbumin alpha (110 aa).

The residue at position 2 (Ser2) is an N-acetylserine. 2 positions are modified to phosphoserine: Ser2 and Ser24. EF-hand domains lie at Lys39 to Asp74 and Leu78 to Ser110. Positions 52, 54, 56, 58, 60, 63, 91, 93, 95, 97, and 102 each coordinate Ca(2+).

In terms of biological role, in muscle, parvalbumin is thought to be involved in relaxation after contraction. It binds two calcium ions. This Homo sapiens (Human) protein is Parvalbumin alpha (PVALB).